Here is a 197-residue protein sequence, read N- to C-terminus: Presequence translocated-associated motor subunit PAM17, mitochondrial (197 aa).

The transit peptide at 1–14 directs the protein to the mitochondrion; it reads MFTSAIRLSSQRLF. 2 helical membrane passes run 64 to 84 and 103 to 123; these read INVGSSLFTALLGCNVSWAYL and VISAGIIASGALGYLLGPIVG.

The protein belongs to the PAM17 family. As to quaternary structure, component of the PAM complex, at least composed of mtHsp70, MGE1, TIM44, PAM16, PAM17 and PAM18/TIM14.

Its subcellular location is the mitochondrion inner membrane. Functionally, component of the PAM complex, a complex required for the translocation of transit peptide-containing proteins from the inner membrane into the mitochondrial matrix in an ATP-dependent manner. In the complex, it is required to organize PAM16-PAM18 (TIM16-TIM14) heterodimer. The polypeptide is Presequence translocated-associated motor subunit PAM17, mitochondrial (PAM17) (Saccharomyces cerevisiae (strain ATCC 204508 / S288c) (Baker's yeast)).